A 338-amino-acid polypeptide reads, in one-letter code: DNA-directed RNA polymerase subunit alpha (338 aa).

Residues 1 to 226 form an alpha N-terminal domain (alpha-NTD) region; sequence MLIAQRPTLS…ELFGLARELN (226 aa). An alpha C-terminal domain (alpha-CTD) region spans residues 240–338; sequence DEQLAADLAL…DDAFVEDEQY (99 aa).

The protein belongs to the RNA polymerase alpha chain family. Homodimer. The RNAP catalytic core consists of 2 alpha, 1 beta, 1 beta' and 1 omega subunit. When a sigma factor is associated with the core the holoenzyme is formed, which can initiate transcription.

It carries out the reaction RNA(n) + a ribonucleoside 5'-triphosphate = RNA(n+1) + diphosphate. In terms of biological role, DNA-dependent RNA polymerase catalyzes the transcription of DNA into RNA using the four ribonucleoside triphosphates as substrates. This is DNA-directed RNA polymerase subunit alpha from Nocardioides sp. (strain ATCC BAA-499 / JS614).